Reading from the N-terminus, the 264-residue chain is Thymidylate synthase (264 aa).

DUMP is bound at residue Arg21. A (6R)-5,10-methylene-5,6,7,8-tetrahydrofolate-binding site is contributed by His51. 126–127 (RR) contacts dUMP. The Nucleophile role is filled by Cys146. Residues 166 to 169 (RSAD), Asn177, and 207 to 209 (HIY) contribute to the dUMP site. Residue Asp169 participates in (6R)-5,10-methylene-5,6,7,8-tetrahydrofolate binding. Residue Ala263 participates in (6R)-5,10-methylene-5,6,7,8-tetrahydrofolate binding.

This sequence belongs to the thymidylate synthase family. Bacterial-type ThyA subfamily. Homodimer.

It localises to the cytoplasm. The enzyme catalyses dUMP + (6R)-5,10-methylene-5,6,7,8-tetrahydrofolate = 7,8-dihydrofolate + dTMP. It participates in pyrimidine metabolism; dTTP biosynthesis. Functionally, catalyzes the reductive methylation of 2'-deoxyuridine-5'-monophosphate (dUMP) to 2'-deoxythymidine-5'-monophosphate (dTMP) while utilizing 5,10-methylenetetrahydrofolate (mTHF) as the methyl donor and reductant in the reaction, yielding dihydrofolate (DHF) as a by-product. This enzymatic reaction provides an intracellular de novo source of dTMP, an essential precursor for DNA biosynthesis. The chain is Thymidylate synthase from Porphyromonas gingivalis (strain ATCC BAA-308 / W83).